Reading from the N-terminus, the 471-residue chain is Ubiquitin-conjugating enzyme E2 variant 3 (471 aa).

Residues 2–145 form the UEV domain; it reads EFDCEGLRRL…QEELPMYSLS (144 aa). 191-219 is an NAD(+) binding site; the sequence is GELGIACTLAISAKGIADRLVLLDLSEGT.

It in the N-terminal section; belongs to the ubiquitin-conjugating enzyme family. UEV subfamily. In the C-terminal section; belongs to the LDH/MDH superfamily. As to quaternary structure, homodimer. In terms of tissue distribution, colon, colon carcinoma cell lines, normal cervical epithelium, carcinomas of the uterine cervix and peripheral blood leukocytes.

Functionally, possible negative regulator of polyubiquitination. The polypeptide is Ubiquitin-conjugating enzyme E2 variant 3 (Homo sapiens (Human)).